A 667-amino-acid chain; its full sequence is Coiled-coil domain-containing protein 154 (667 aa).

4 coiled-coil regions span residues 76–182 (VVEL…QEAG), 215–302 (RRVD…GQHE), 384–410 (LLREKSRALEASVAQLAGQLKELSGHL), and 457–521 (LRGV…KEDN).

It localises to the early endosome. The protein is Coiled-coil domain-containing protein 154 of Homo sapiens (Human).